A 385-amino-acid polypeptide reads, in one-letter code: Outer membrane protein P2 (385 aa).

Residues 1-20 form the signal peptide; sequence MKKTLAALIVGAFAASAANA.

Belongs to the Gram-negative porin family. In terms of assembly, homotrimer.

The protein localises to the cell outer membrane. In terms of biological role, forms pores that allow passive diffusion of small molecules across the outer membrane. The sequence is that of Outer membrane protein P2 (ompP2) from Haemophilus influenzae.